A 468-amino-acid polypeptide reads, in one-letter code: Dimethylamine methyltransferase MtbB1 (468 aa).

Residue Pyl356 is a non-standard amino acid, pyrrolysine.

Belongs to the dimethylamine methyltransferase family.

It catalyses the reaction Co(I)-[dimethylamine-specific corrinoid protein] + dimethylamine + H(+) = methyl-Co(III)-[dimethylamine-specific corrinoid protein] + methylamine. Its pathway is one-carbon metabolism; methanogenesis from dimethylamine. Functionally, catalyzes the transfer of a methyl group from dimethylamine to the corrinoid cofactor of MtbC. In Methanosarcina mazei (strain ATCC BAA-159 / DSM 3647 / Goe1 / Go1 / JCM 11833 / OCM 88) (Methanosarcina frisia), this protein is Dimethylamine methyltransferase MtbB1 (mtbB1).